The chain runs to 365 residues: Histidinol-phosphate aminotransferase (365 aa).

The disordered stretch occupies residues 1–23; that stretch reads MSRPVPNPGILDIAPYTPGKSPV. Lys-221 bears the N6-(pyridoxal phosphate)lysine mark.

The protein belongs to the class-II pyridoxal-phosphate-dependent aminotransferase family. Histidinol-phosphate aminotransferase subfamily. As to quaternary structure, homodimer. The cofactor is pyridoxal 5'-phosphate.

The enzyme catalyses L-histidinol phosphate + 2-oxoglutarate = 3-(imidazol-4-yl)-2-oxopropyl phosphate + L-glutamate. The protein operates within amino-acid biosynthesis; L-histidine biosynthesis; L-histidine from 5-phospho-alpha-D-ribose 1-diphosphate: step 7/9. This chain is Histidinol-phosphate aminotransferase, found in Rhodopseudomonas palustris (strain BisB18).